The sequence spans 469 residues: Glutamate--tRNA ligase (469 aa).

The 'HIGH' region motif lies at 9–19; it reads PSPTGFLHVGG. The 'KMSKS' region motif lies at 236–240; the sequence is KLSKR. Position 239 (K239) interacts with ATP.

Belongs to the class-I aminoacyl-tRNA synthetase family. Glutamate--tRNA ligase type 1 subfamily. Monomer.

It is found in the cytoplasm. It carries out the reaction tRNA(Glu) + L-glutamate + ATP = L-glutamyl-tRNA(Glu) + AMP + diphosphate. In terms of biological role, catalyzes the attachment of glutamate to tRNA(Glu) in a two-step reaction: glutamate is first activated by ATP to form Glu-AMP and then transferred to the acceptor end of tRNA(Glu). This chain is Glutamate--tRNA ligase, found in Pseudoalteromonas atlantica (strain T6c / ATCC BAA-1087).